Reading from the N-terminus, the 394-residue chain is Elongation factor Tu (394 aa).

The 195-residue stretch at 10-204 (KPHVNVGTIG…ALDRYIPTPE (195 aa)) folds into the tr-type G domain. The segment at 19 to 26 (GHVDHGKT) is G1. 19–26 (GHVDHGKT) lines the GTP pocket. Mg(2+) is bound at residue Thr26. The G2 stretch occupies residues 60–64 (GITIN). The tract at residues 81-84 (DCPG) is G3. GTP is bound by residues 81 to 85 (DCPGH) and 136 to 139 (NKCD). Positions 136 to 139 (NKCD) are G4. The interval 174 to 176 (SAL) is G5.

Belongs to the TRAFAC class translation factor GTPase superfamily. Classic translation factor GTPase family. EF-Tu/EF-1A subfamily. Monomer.

It is found in the cytoplasm. It carries out the reaction GTP + H2O = GDP + phosphate + H(+). GTP hydrolase that promotes the GTP-dependent binding of aminoacyl-tRNA to the A-site of ribosomes during protein biosynthesis. This is Elongation factor Tu from Neisseria gonorrhoeae.